The following is an 818-amino-acid chain: Glycerol-3-phosphate acyltransferase (818 aa).

The HXXXXD motif motif lies at 305–310; it reads CHRSHM.

The protein belongs to the GPAT/DAPAT family.

Its subcellular location is the cell inner membrane. It catalyses the reaction sn-glycerol 3-phosphate + an acyl-CoA = a 1-acyl-sn-glycero-3-phosphate + CoA. It functions in the pathway phospholipid metabolism; CDP-diacylglycerol biosynthesis; CDP-diacylglycerol from sn-glycerol 3-phosphate: step 1/3. In Edwardsiella ictaluri (strain 93-146), this protein is Glycerol-3-phosphate acyltransferase.